A 356-amino-acid polypeptide reads, in one-letter code: S-adenosylmethionine:tRNA ribosyltransferase-isomerase (356 aa).

It belongs to the QueA family. Monomer.

It is found in the cytoplasm. It catalyses the reaction 7-aminomethyl-7-carbaguanosine(34) in tRNA + S-adenosyl-L-methionine = epoxyqueuosine(34) in tRNA + adenine + L-methionine + 2 H(+). It functions in the pathway tRNA modification; tRNA-queuosine biosynthesis. Functionally, transfers and isomerizes the ribose moiety from AdoMet to the 7-aminomethyl group of 7-deazaguanine (preQ1-tRNA) to give epoxyqueuosine (oQ-tRNA). In Escherichia coli O6:K15:H31 (strain 536 / UPEC), this protein is S-adenosylmethionine:tRNA ribosyltransferase-isomerase.